We begin with the raw amino-acid sequence, 356 residues long: UDP-N-acetylglucosamine--N-acetylmuramyl-(pentapeptide) pyrophosphoryl-undecaprenol N-acetylglucosamine transferase (356 aa).

UDP-N-acetyl-alpha-D-glucosamine is bound by residues 15-17 (TGG), N127, R163, S191, I244, 263-268 (ALTVSE), and Q288.

Belongs to the glycosyltransferase 28 family. MurG subfamily.

The protein localises to the cell inner membrane. It catalyses the reaction di-trans,octa-cis-undecaprenyl diphospho-N-acetyl-alpha-D-muramoyl-L-alanyl-D-glutamyl-meso-2,6-diaminopimeloyl-D-alanyl-D-alanine + UDP-N-acetyl-alpha-D-glucosamine = di-trans,octa-cis-undecaprenyl diphospho-[N-acetyl-alpha-D-glucosaminyl-(1-&gt;4)]-N-acetyl-alpha-D-muramoyl-L-alanyl-D-glutamyl-meso-2,6-diaminopimeloyl-D-alanyl-D-alanine + UDP + H(+). The protein operates within cell wall biogenesis; peptidoglycan biosynthesis. Its function is as follows. Cell wall formation. Catalyzes the transfer of a GlcNAc subunit on undecaprenyl-pyrophosphoryl-MurNAc-pentapeptide (lipid intermediate I) to form undecaprenyl-pyrophosphoryl-MurNAc-(pentapeptide)GlcNAc (lipid intermediate II). The sequence is that of UDP-N-acetylglucosamine--N-acetylmuramyl-(pentapeptide) pyrophosphoryl-undecaprenol N-acetylglucosamine transferase from Yersinia pestis (strain Pestoides F).